Reading from the N-terminus, the 103-residue chain is Turripeptide OL55-like (103 aa).

Post-translationally, contains 8 disulfide bonds. Expressed by the venom duct.

It localises to the secreted. Its function is as follows. Acts as a neurotoxin by inhibiting an ion channel. This is Turripeptide OL55-like from Lophiotoma albina (Sea snail).